A 171-amino-acid polypeptide reads, in one-letter code: 3-hydroxydecanoyl-[acyl-carrier-protein] dehydratase (171 aa).

Residue H70 is part of the active site.

It belongs to the thioester dehydratase family. FabA subfamily. In terms of assembly, homodimer.

Its subcellular location is the cytoplasm. The enzyme catalyses a (3R)-hydroxyacyl-[ACP] = a (2E)-enoyl-[ACP] + H2O. It carries out the reaction (3R)-hydroxydecanoyl-[ACP] = (2E)-decenoyl-[ACP] + H2O. It catalyses the reaction (2E)-decenoyl-[ACP] = (3Z)-decenoyl-[ACP]. It functions in the pathway lipid metabolism; fatty acid biosynthesis. Its function is as follows. Necessary for the introduction of cis unsaturation into fatty acids. Catalyzes the dehydration of (3R)-3-hydroxydecanoyl-ACP to E-(2)-decenoyl-ACP and then its isomerization to Z-(3)-decenoyl-ACP. Can catalyze the dehydratase reaction for beta-hydroxyacyl-ACPs with saturated chain lengths up to 16:0, being most active on intermediate chain length. The polypeptide is 3-hydroxydecanoyl-[acyl-carrier-protein] dehydratase (Shewanella pealeana (strain ATCC 700345 / ANG-SQ1)).